Reading from the N-terminus, the 144-residue chain is MKALQASIAYSFPISSPAASPRRFSRVIRAQADPSDKSMEVMRKFSEQFCRKSDTYFCVDKSVTAVVIKGLADHRDTLGAPLCPCRHYDDKEAEAKQGFWNCPCVPMRERKECHCMLFLTPDNDFAGKEQTITLDEIREVTSNM.

A chloroplast-targeting transit peptide spans methionine 1 to glutamine 31. Cysteine 83 is a [4Fe-4S] cluster binding site. The active-site Nucleophile is the cysteine 85. Cysteines 85 and 115 form a disulfide. Positions 102, 104, and 113 each coordinate [4Fe-4S] cluster.

The protein belongs to the ferredoxin thioredoxin reductase beta subunit family. In terms of assembly, heterodimer of subunit A (variable subunit) and subunit B (catalytic subunit). Heterodimeric FTR forms a complex with ferredoxin and thioredoxin. Requires [4Fe-4S] cluster as cofactor.

The protein localises to the plastid. Its subcellular location is the chloroplast. The enzyme catalyses [thioredoxin]-disulfide + 2 reduced [2Fe-2S]-[ferredoxin] + 2 H(+) = [thioredoxin]-dithiol + 2 oxidized [2Fe-2S]-[ferredoxin]. Functionally, catalytic subunit of the ferredoxin-thioredoxin reductase (FTR), which catalyzes the two-electron reduction of thioredoxins by the electrons provided by reduced ferredoxin. The polypeptide is Ferredoxin-thioredoxin reductase catalytic chain, chloroplastic (FTRC) (Spinacia oleracea (Spinach)).